A 457-amino-acid chain; its full sequence is Flavohemoprotein-2 (457 aa).

The region spanning 2–157 (ALSEDTIKAV…LADLLIKREE (156 aa)) is the Globin domain. Residue histidine 106 participates in heme b binding. Active-site charge relay system residues include tyrosine 116 and glutamate 156. Residues 168–456 (GGWRQTRTFR…FEMFGPFKAS (289 aa)) form a reductase region. The FAD-binding FR-type domain maps to 171-278 (RQTRTFRVEE…APPYGDFFLR (108 aa)). Residues tyrosine 210 and 227-230 (RQYS) each bind FAD. Residue 320 to 325 (GIGQTP) participates in NADP(+) binding. Residue 449 to 452 (MFGP) coordinates FAD.

The protein belongs to the globin family. Two-domain flavohemoproteins subfamily. In the C-terminal section; belongs to the flavoprotein pyridine nucleotide cytochrome reductase family. Monomer. Heme b is required as a cofactor. FAD serves as cofactor.

It catalyses the reaction 2 nitric oxide + NADPH + 2 O2 = 2 nitrate + NADP(+) + H(+). The catalysed reaction is 2 nitric oxide + NADH + 2 O2 = 2 nitrate + NAD(+) + H(+). Flavohemoprotein involved in nitric oxide (NO) detoxification in an aerobic process, termed nitric oxide dioxygenase (NOD) reaction that utilizes O(2) and NAD(P)H to convert NO to nitrate, which protects the protozoan parasite from various noxious nitrogen compounds. Therefore, plays a central role in the inducible response to nitrosative stress. May also be involved in O(2) detoxification. This chain is Flavohemoprotein-2 (hmpA-2), found in Giardia intestinalis (strain P15) (Giardia lamblia).